Here is a 465-residue protein sequence, read N- to C-terminus: 28S rRNA (cytosine-C(5))-methyltransferase (465 aa).

Gly2 carries the post-translational modification N-acetylglycine. At Ser167 the chain carries Phosphoserine. S-adenosyl-L-methionine contacts are provided by residues 234–240, Asp258, Arg263, and Asp305; that span reads CAAPGNK. The active-site Nucleophile is the Cys359. The interval 430 to 465 is disordered; it reads TPAPQTDAMDPEPLSQVPKRKRRRKAAVGASMQPST.

Belongs to the class I-like SAM-binding methyltransferase superfamily. RsmB/NOP family. In terms of tissue distribution, in the hippocampus, specifically expressed in adult hippocampal NG2-positive oligodendrocyte precursor cells (at protein level).

The protein resides in the nucleus. The protein localises to the nucleolus. The catalysed reaction is a cytidine in 28S rRNA + S-adenosyl-L-methionine = a 5-methylcytidine in 28S rRNA + S-adenosyl-L-homocysteine + H(+). S-adenosyl-L-methionine-dependent methyltransferase that specifically methylates the C(5) position of cytosine 3438 (m5C3438) in 28S rRNA. m5C3782 promotes protein translation without affecting ribosome biogenesis and fidelity. Required for corpus callosum and cerebral cortex development. The sequence is that of 28S rRNA (cytosine-C(5))-methyltransferase from Mus musculus (Mouse).